We begin with the raw amino-acid sequence, 874 residues long: Alanine--tRNA ligase (874 aa).

The Zn(2+) site is built by His562, His566, Cys664, and His668.

This sequence belongs to the class-II aminoacyl-tRNA synthetase family. Requires Zn(2+) as cofactor.

It localises to the cytoplasm. The enzyme catalyses tRNA(Ala) + L-alanine + ATP = L-alanyl-tRNA(Ala) + AMP + diphosphate. Functionally, catalyzes the attachment of alanine to tRNA(Ala) in a two-step reaction: alanine is first activated by ATP to form Ala-AMP and then transferred to the acceptor end of tRNA(Ala). Also edits incorrectly charged Ser-tRNA(Ala) and Gly-tRNA(Ala) via its editing domain. This is Alanine--tRNA ligase from Shewanella sp. (strain ANA-3).